The primary structure comprises 160 residues: Ribosomal RNA large subunit methyltransferase H (160 aa).

S-adenosyl-L-methionine contacts are provided by residues Leu76, Gly108, and 127–132; that span reads LGKMTW.

The protein belongs to the RNA methyltransferase RlmH family. As to quaternary structure, homodimer.

It is found in the cytoplasm. The catalysed reaction is pseudouridine(1915) in 23S rRNA + S-adenosyl-L-methionine = N(3)-methylpseudouridine(1915) in 23S rRNA + S-adenosyl-L-homocysteine + H(+). In terms of biological role, specifically methylates the pseudouridine at position 1915 (m3Psi1915) in 23S rRNA. The sequence is that of Ribosomal RNA large subunit methyltransferase H from Rhizobium johnstonii (strain DSM 114642 / LMG 32736 / 3841) (Rhizobium leguminosarum bv. viciae).